Reading from the N-terminus, the 618-residue chain is MGSRRHKNKQAAPPTLEEFQARKEKKANRKLEKGKRPSTTQGDEVSDRKKKKSKPFKKSRKEEEEVVEEDKDLPEVDLEELSKARKSLFDDEEDDDEAGLVDEELKDEFDLEQEYDYDEDEDNDAHPIFSDDDDEADLEELNAQNMEALSKKLDEEEAEEAEEAEMELVEAENMQPRADILPTEEQEEMMAQETPNLTSTRTRMIEIVKVLENFKTLGAEGRSRGEYVDRLLKDICEYFGYTPFLAEKLFNLFSPAEAMEFFEANEIARPITIRTNTLKTRRRDLAQTLVNRGVNLQPIGSWTKVGLQIFDSQVPIGATPEYLAGHYILQAASSFLPVIALDPHENERILDMAAAPGGKTTYISAMMKNTGCVFANDANKSRTKSLIANIHRLGCTNTIVCNYDAREFPKVIGGFDRILLDAPCSGTGVIGKDQSVKVSRTEKDFIQIPHLQKQLLLSAIDSVDCNSKHGGVIVYSTCSVAVEEDEAVIDYALRKRPNVKLVDTGLAIGKEAFTSYRGKKFHPSVKLARRYYPHTYNVDGFFVAKFQKIGPSSFDDNQASAKEKETAARKEALEEGIIHSDFATFEDEEDDKYIEKSVKNNLLKKGVNPKAKRPSNEK.

The interval 1 to 132 (MGSRRHKNKQ…NDAHPIFSDD (132 aa)) is disordered. The segment covering 48-59 (RKKKKSKPFKKS) has biased composition (basic residues). Acidic residues predominate over residues 64–79 (EEVVEEDKDLPEVDLE). Basic and acidic residues predominate over residues 80–89 (ELSKARKSLF). Over residues 90–123 (DDEEDDDEAGLVDEELKDEFDLEQEYDYDEDEDN) the composition is skewed to acidic residues. Residues 353-359 (AAAPGGK), Asp377, Asp404, and Asp421 contribute to the S-adenosyl-L-methionine site. Catalysis depends on Cys478, which acts as the Nucleophile. A Phosphoserine modification is found at Ser580.

Belongs to the class I-like SAM-binding methyltransferase superfamily. RsmB/NOP family. Interacts with NOP53. Interacts with TRM112.

It is found in the nucleus. It localises to the nucleolus. It catalyses the reaction cytidine(2870) in 25S rRNA + S-adenosyl-L-methionine = 5-methylcytidine(2870) in 25S rRNA + S-adenosyl-L-homocysteine + H(+). Functionally, S-adenosyl-L-methionine-dependent methyltransferase that specifically methylates the C(5) position of cytosine 2870 (m5C2870) in 25S rRNA. Required for 60S ribosomal subunit synthesis and processing. This is 25S rRNA (cytosine(2870)-C(5))-methyltransferase (NOP2) from Saccharomyces cerevisiae (strain ATCC 204508 / S288c) (Baker's yeast).